A 493-amino-acid polypeptide reads, in one-letter code: F(420)H(2) dehydrogenase subunit N (493 aa).

The next 14 membrane-spanning stretches (helical) occupy residues 7 to 27 (LAPE…GVFL), 34 to 54 (ILGY…VKSF), 78 to 98 (LSQF…IASI), 107 to 127 (TEEF…VASA), 130 to 150 (LILL…LAGF), 165 to 185 (FVIG…VYGA), 205 to 225 (PIGI…MALV), 244 to 264 (ALLA…VFII), 273 to 293 (WQFM…VVAV), 310 to 330 (AGYI…GGIM), 333 to 353 (LAHA…VWMI), 381 to 401 (ALCM…AGFM), 404 to 424 (FVLF…IAIL), and 454 to 474 (IPFP…VMGL).

This sequence belongs to the complex I subunit 2 family. In terms of assembly, the FPO complex is composed of at least 13 different subunits. FpoA, FpoH, FpoJ, FpoK, FpoL, FpoM and FpoN proteins constitute the membrane sector of the complex.

The protein resides in the cell membrane. It catalyses the reaction methanophenazine + reduced coenzyme F420-(gamma-L-Glu)(n) = dihydromethanophenazine + oxidized coenzyme F420-(gamma-L-Glu)(n) + H(+). In terms of biological role, component of the F(420)H(2) dehydrogenase (FPO complex) which is part of the energy-conserving F(420)H(2):heterodisulfide oxidoreductase system. The membrane-bound electron transfer system of the complex plays an important role in the metabolism of methylotrophic methanogens when the organisms grow on methanol or methylamines. Catalyzes the oxidation of methanophenazine to dihydromethanophenazine. It shuttles electrons from F(420)H(2), via FAD and iron-sulfur (Fe-S) centers, to methanophenazine (an electron carrier in the membrane). It couples the redox reaction to proton translocation (for every two electrons transferred, two hydrogen ions are translocated across the cytoplasmic membrane), and thus conserves the redox energy in a proton gradient. It also catalyzes the oxidation of F(420)H(2) with quinones such as 2,3-dimethyl-1,4-naphthoquinone, 2-methyl-1,4-naphthoquinone and tetramethyl-p-benzoquinone. This is F(420)H(2) dehydrogenase subunit N (fpoN) from Methanosarcina mazei (strain ATCC BAA-159 / DSM 3647 / Goe1 / Go1 / JCM 11833 / OCM 88) (Methanosarcina frisia).